The sequence spans 345 residues: UDP-3-O-acylglucosamine N-acyltransferase (345 aa).

H248 (proton acceptor) is an active-site residue.

It belongs to the transferase hexapeptide repeat family. LpxD subfamily. Homotrimer.

It carries out the reaction a UDP-3-O-[(3R)-3-hydroxyacyl]-alpha-D-glucosamine + a (3R)-hydroxyacyl-[ACP] = a UDP-2-N,3-O-bis[(3R)-3-hydroxyacyl]-alpha-D-glucosamine + holo-[ACP] + H(+). It functions in the pathway bacterial outer membrane biogenesis; LPS lipid A biosynthesis. Functionally, catalyzes the N-acylation of UDP-3-O-acylglucosamine using 3-hydroxyacyl-ACP as the acyl donor. Is involved in the biosynthesis of lipid A, a phosphorylated glycolipid that anchors the lipopolysaccharide to the outer membrane of the cell. The polypeptide is UDP-3-O-acylglucosamine N-acyltransferase (Trichodesmium erythraeum (strain IMS101)).